Consider the following 464-residue polypeptide: MMARRDPKPGAKRLVRAQTLQKQRRAPVGPRAPPPDEEDPRLKCKNCEAFGHTARSTRCPMKCWKAALVPPNFGEKEGKENLKPWKPQVEANPGPLNKDKGEKEERPRPQDPQRKALLHIFSRKPPEKPLPNQKGSTESSDYLRVASGPMPVHTTSKRPRVDPVLSDRSATEMSDRGSVLASLSPLRKASLSSSSSLGPKERQTGAAADIPQTAVRHQGPEPLLVVKPTHSSPAGGCREVPQAASKTHGLLQAVSPQAQDKRPAVTSQPCPPAATHSLGLGSNLSFGPGAKRSAPAPIQACLNFPKKPRLGPFQIPESAIQGGELGAPENLQPPPAATELGPRTSPQTGTRTPAQVLSGDRQPPHSRPCLPTAQACTMSHHPAASHDGAQPLRVLFRRLENGRWSSSLLTAPSFHSPEKPGAFLAQSPHVSEKSEGPCVRVPPSVLYEDLQVPSSSEDSDSDLE.

Disordered regions lie at residues 1–43, 71–294, 312–386, 412–437, and 445–464; these read MMAR…PRLK, PNFG…KRSA, PFQI…AASH, PSFH…SEGP, and VLYE…SDLE. Basic and acidic residues-rich tracts occupy residues 74 to 83 and 97 to 114; these read GEKEGKENLK and NKDK…DPQR. The span at 180-197 shows a compositional bias: low complexity; that stretch reads LASLSPLRKASLSSSSSL. Positions 344–355 are enriched in polar residues; the sequence is TSPQTGTRTPAQ.

Belongs to the FAM90 family.

The sequence is that of Protein FAM90A1 (FAM90A1) from Homo sapiens (Human).